Reading from the N-terminus, the 299-residue chain is Protoheme IX farnesyltransferase (299 aa).

9 helical membrane passes run 25-45, 47-67, 95-115, 119-139, 147-167, 173-193, 218-238, 243-263, and 279-299; these read VVVL…RAGV, WTVL…AAAV, LAAL…LLTF, LAAW…TGFL, IVIG…AVSG, PLLL…ALAI, LHIL…YAIH, LYLL…WALY, and IRYL…PLTL.

The protein belongs to the UbiA prenyltransferase family. Protoheme IX farnesyltransferase subfamily.

It localises to the cell inner membrane. The enzyme catalyses heme b + (2E,6E)-farnesyl diphosphate + H2O = Fe(II)-heme o + diphosphate. The protein operates within porphyrin-containing compound metabolism; heme O biosynthesis; heme O from protoheme: step 1/1. Functionally, converts heme B (protoheme IX) to heme O by substitution of the vinyl group on carbon 2 of heme B porphyrin ring with a hydroxyethyl farnesyl side group. This is Protoheme IX farnesyltransferase from Azotobacter vinelandii (strain DJ / ATCC BAA-1303).